Consider the following 554-residue polypeptide: Dihydroxy-acid dehydratase (554 aa).

C48 contacts [2Fe-2S] cluster. Residue D80 participates in Mg(2+) binding. [2Fe-2S] cluster is bound at residue C121. Mg(2+)-binding residues include D122 and K123. The residue at position 123 (K123) is an N6-carboxylysine. C193 is a binding site for [2Fe-2S] cluster. E444 contacts Mg(2+). S470 acts as the Proton acceptor in catalysis.

This sequence belongs to the IlvD/Edd family. Homodimer. [2Fe-2S] cluster is required as a cofactor. Mg(2+) serves as cofactor.

The catalysed reaction is (2R)-2,3-dihydroxy-3-methylbutanoate = 3-methyl-2-oxobutanoate + H2O. It carries out the reaction (2R,3R)-2,3-dihydroxy-3-methylpentanoate = (S)-3-methyl-2-oxopentanoate + H2O. It functions in the pathway amino-acid biosynthesis; L-isoleucine biosynthesis; L-isoleucine from 2-oxobutanoate: step 3/4. Its pathway is amino-acid biosynthesis; L-valine biosynthesis; L-valine from pyruvate: step 3/4. Functionally, functions in the biosynthesis of branched-chain amino acids. Catalyzes the dehydration of (2R,3R)-2,3-dihydroxy-3-methylpentanoate (2,3-dihydroxy-3-methylvalerate) into 2-oxo-3-methylpentanoate (2-oxo-3-methylvalerate) and of (2R)-2,3-dihydroxy-3-methylbutanoate (2,3-dihydroxyisovalerate) into 2-oxo-3-methylbutanoate (2-oxoisovalerate), the penultimate precursor to L-isoleucine and L-valine, respectively. The protein is Dihydroxy-acid dehydratase of Tremblaya princeps.